A 347-amino-acid chain; its full sequence is N-acetyl-gamma-glutamyl-phosphate reductase (347 aa).

Residue cysteine 151 is part of the active site.

It belongs to the NAGSA dehydrogenase family. Type 1 subfamily.

The protein localises to the cytoplasm. It carries out the reaction N-acetyl-L-glutamate 5-semialdehyde + phosphate + NADP(+) = N-acetyl-L-glutamyl 5-phosphate + NADPH + H(+). It participates in amino-acid biosynthesis; L-arginine biosynthesis; N(2)-acetyl-L-ornithine from L-glutamate: step 3/4. Functionally, catalyzes the NADPH-dependent reduction of N-acetyl-5-glutamyl phosphate to yield N-acetyl-L-glutamate 5-semialdehyde. In Pelotomaculum thermopropionicum (strain DSM 13744 / JCM 10971 / SI), this protein is N-acetyl-gamma-glutamyl-phosphate reductase.